We begin with the raw amino-acid sequence, 441 residues long: Arginine biosynthesis bifunctional protein ArgJ, mitochondrial (441 aa).

The N-terminal 8 residues, 1–8 (MRISSTLL), are a transit peptide targeting the mitochondrion. 6 residues coordinate substrate: Thr-177, Lys-204, Thr-215, Glu-301, Asn-436, and Ser-441. Residue Thr-215 is the Nucleophile of the active site.

The protein belongs to the ArgJ family. As to quaternary structure, heterodimer of an alpha and a beta chain. In terms of processing, the alpha and beta chains are autoproteolytically processed from a single precursor protein within the mitochondrion.

Its subcellular location is the mitochondrion matrix. The catalysed reaction is N(2)-acetyl-L-ornithine + L-glutamate = N-acetyl-L-glutamate + L-ornithine. The enzyme catalyses L-glutamate + acetyl-CoA = N-acetyl-L-glutamate + CoA + H(+). Its pathway is amino-acid biosynthesis; L-arginine biosynthesis; L-ornithine and N-acetyl-L-glutamate from L-glutamate and N(2)-acetyl-L-ornithine (cyclic): step 1/1. It functions in the pathway amino-acid biosynthesis; L-arginine biosynthesis; N(2)-acetyl-L-ornithine from L-glutamate: step 1/4. With respect to regulation, inhibited by ornithine. In terms of biological role, catalyzes two activities which are involved in the cyclic version of arginine biosynthesis: the synthesis of acetylglutamate from glutamate and acetyl-CoA, and of ornithine by transacetylation between acetylornithine and glutamate. The protein is Arginine biosynthesis bifunctional protein ArgJ, mitochondrial of Saccharomyces cerevisiae (strain ATCC 204508 / S288c) (Baker's yeast).